Here is a 125-residue protein sequence, read N- to C-terminus: Small ribosomal subunit protein uS12 (125 aa).

D89 is subject to 3-methylthioaspartic acid. The tract at residues 105–125 (QGVKDRKQSRSKYGAKKPKAK) is disordered. Over residues 113 to 125 (SRSKYGAKKPKAK) the composition is skewed to basic residues.

This sequence belongs to the universal ribosomal protein uS12 family. In terms of assembly, part of the 30S ribosomal subunit. Contacts proteins S8 and S17. May interact with IF1 in the 30S initiation complex.

With S4 and S5 plays an important role in translational accuracy. Its function is as follows. Interacts with and stabilizes bases of the 16S rRNA that are involved in tRNA selection in the A site and with the mRNA backbone. Located at the interface of the 30S and 50S subunits, it traverses the body of the 30S subunit contacting proteins on the other side and probably holding the rRNA structure together. The combined cluster of proteins S8, S12 and S17 appears to hold together the shoulder and platform of the 30S subunit. This chain is Small ribosomal subunit protein uS12, found in Delftia acidovorans (strain DSM 14801 / SPH-1).